The primary structure comprises 205 residues: Putative 3-methyladenine DNA glycosylase (205 aa).

It belongs to the DNA glycosylase MPG family.

This chain is Putative 3-methyladenine DNA glycosylase, found in Bacillus cereus (strain ATCC 10987 / NRS 248).